An 83-amino-acid polypeptide reads, in one-letter code: Small ribosomal subunit protein bS20 (83 aa).

It belongs to the bacterial ribosomal protein bS20 family.

In terms of biological role, binds directly to 16S ribosomal RNA. This is Small ribosomal subunit protein bS20 from Staphylococcus aureus (strain JH1).